Consider the following 374-residue polypeptide: Alcohol dehydrogenase S chain (374 aa).

An N-acetylserine modification is found at Ser2. Cys47, His68, Cys98, Cys101, Cys104, Cys112, and Cys174 together coordinate Zn(2+). Residues 199 to 204, Asp223, Lys228, 292 to 294, and Arg369 contribute to the NAD(+) site; these read GLGGVG and VGV.

The protein belongs to the zinc-containing alcohol dehydrogenase family. Class-I subfamily. As to quaternary structure, dimer of identical or non-identical chains of two types (E and S) coded by 2 separate genes at different loci. Requires Zn(2+) as cofactor.

The protein resides in the cytoplasm. The enzyme catalyses a primary alcohol + NAD(+) = an aldehyde + NADH + H(+). The catalysed reaction is a secondary alcohol + NAD(+) = a ketone + NADH + H(+). This chain is Alcohol dehydrogenase S chain, found in Equus caballus (Horse).